The primary structure comprises 411 residues: L-cysteine:1D-myo-inositol 2-amino-2-deoxy-alpha-D-glucopyranoside ligase (411 aa).

C43 lines the Zn(2+) pocket. L-cysteinyl-5'-AMP-binding positions include 43-46 (CGIT), T58, and 81-83 (NVT). The 'HIGH' region signature appears at 45–55 (ITPYDATHLGH). The 'ERGGDP' region motif lies at 186–191 (QRGGDP). W226 contacts L-cysteinyl-5'-AMP. Position 230 (C230) interacts with Zn(2+). 248 to 250 (GSD) lines the L-cysteinyl-5'-AMP pocket. H255 contributes to the Zn(2+) binding site. I282 contacts L-cysteinyl-5'-AMP. Residues 288 to 292 (KMSKS) carry the 'KMSKS' region motif.

Belongs to the class-I aminoacyl-tRNA synthetase family. MshC subfamily. As to quaternary structure, monomer. Requires Zn(2+) as cofactor.

It carries out the reaction 1D-myo-inositol 2-amino-2-deoxy-alpha-D-glucopyranoside + L-cysteine + ATP = 1D-myo-inositol 2-(L-cysteinylamino)-2-deoxy-alpha-D-glucopyranoside + AMP + diphosphate + H(+). Functionally, catalyzes the ATP-dependent condensation of GlcN-Ins and L-cysteine to form L-Cys-GlcN-Ins. The polypeptide is L-cysteine:1D-myo-inositol 2-amino-2-deoxy-alpha-D-glucopyranoside ligase (Mycobacterium marinum (strain ATCC BAA-535 / M)).